The primary structure comprises 1015 residues: Frequency clock protein (1015 aa).

8 disordered regions span residues 1 to 138, 183 to 285, 352 to 383, 402 to 465, 544 to 614, 629 to 668, 706 to 728, and 895 to 1015; these read MQPT…SADD, KRKK…QKVD, DFSP…TFSS, HVAG…DPDR, GRKI…VSAS, SPNE…NRRK, ERPD…GSSI, and SEDD…SSQG. The segment covering 49-68 has biased composition (low complexity); that stretch reads SAPPNDSNENSSSPRRASSG. A compositionally biased stretch (basic and acidic residues) spans 69–80; it reads ESHETGQSDAKK. Over residues 82-95 the composition is skewed to polar residues; sequence FNQSNQNPTATFDS. Residues 107–117 are compositionally biased toward basic and acidic residues; it reads KESDSSNEDKP. Composition is skewed to low complexity over residues 203 to 216, 228 to 267, and 356 to 368; these read SPNT…STTK, SGSG…SGTS, and QQQQ…QQQQ. Residues 369–383 are compositionally biased toward polar residues; that stretch reads PKSNFITNPGATFSS. Over residues 431–442 the composition is skewed to low complexity; that stretch reads NSSSNGNDSGTN. Residues 443 to 453 show a composition bias toward pro residues; that stretch reads PSPPMPPPPEQ. A compositionally biased stretch (basic and acidic residues) spans 454-465; the sequence is RPTRPRDLDPDR. Residues 556-570 show a composition bias toward polar residues; that stretch reads TKFSSESSGDLSQRS. The Nuclear localization signal motif lies at 584–588; it reads HKRQK. Residues 590–600 show a composition bias toward low complexity; sequence GHSTGDSGSSG. The span at 629–643 shows a compositional bias: polar residues; that stretch reads SPNEQSSMEDGTLSS. Composition is skewed to acidic residues over residues 895 to 909 and 934 to 946; these read SEDD…EFNS and SGDE…EDDI. A compositionally biased stretch (low complexity) spans 976 to 1003; it reads GSSRGRSNSASAEAVLRAGGSSAATAGG.

Belongs to the FRQ family.

It is found in the nucleus. Functionally, circadian clock component involved in the generation of biological rhythms, in particular in rhythm stability, period length, and temperature compensation. Behaves as a negative element in circadian transcriptional loop. The sequence is that of Frequency clock protein (FRQ) from Trichoderma spinulosum (Hypocrea spinulosa).